Reading from the N-terminus, the 141-residue chain is MPTINQLVRRGREKLKRKTKAPALDSCPQRRGVCVQVMTRTPKKPNSALRKVAKVRLTNGKEVIAYIPGEGHNLQEHSIVLVRGGRVKDLPGVRYHIIRGTLDASGAVGPSNTNKLNRNVSRSKYGVKRPKAGAKPASKAK.

3-methylthioaspartic acid is present on Asp-89. The disordered stretch occupies residues 104-141; that stretch reads ASGAVGPSNTNKLNRNVSRSKYGVKRPKAGAKPASKAK. The span at 110-122 shows a compositional bias: polar residues; it reads PSNTNKLNRNVSR. The span at 125 to 141 shows a compositional bias: basic residues; the sequence is YGVKRPKAGAKPASKAK.

The protein belongs to the universal ribosomal protein uS12 family. As to quaternary structure, part of the 30S ribosomal subunit. Contacts proteins S8 and S17. May interact with IF1 in the 30S initiation complex.

Functionally, with S4 and S5 plays an important role in translational accuracy. Its function is as follows. Interacts with and stabilizes bases of the 16S rRNA that are involved in tRNA selection in the A site and with the mRNA backbone. Located at the interface of the 30S and 50S subunits, it traverses the body of the 30S subunit contacting proteins on the other side and probably holding the rRNA structure together. The combined cluster of proteins S8, S12 and S17 appears to hold together the shoulder and platform of the 30S subunit. This is Small ribosomal subunit protein uS12 from Methylacidiphilum infernorum (isolate V4) (Methylokorus infernorum (strain V4)).